A 161-amino-acid polypeptide reads, in one-letter code: Nucleotide-binding protein Pnec_0318 (161 aa).

Belongs to the YajQ family.

In terms of biological role, nucleotide-binding protein. The polypeptide is Nucleotide-binding protein Pnec_0318 (Polynucleobacter necessarius subsp. necessarius (strain STIR1)).